Here is a 290-residue protein sequence, read N- to C-terminus: Shikimate dehydrogenase (NADP(+)) (290 aa).

Residues 20–22 and T67 contribute to the shikimate site; that span reads SLS. Residue K71 is the Proton acceptor of the active site. Residues N92 and D107 each coordinate shikimate. Residues 130-134 and L227 each bind NADP(+); that span reads GAGGA. Position 229 (Y229) interacts with shikimate. G250 serves as a coordination point for NADP(+).

This sequence belongs to the shikimate dehydrogenase family. In terms of assembly, homodimer.

The enzyme catalyses shikimate + NADP(+) = 3-dehydroshikimate + NADPH + H(+). The protein operates within metabolic intermediate biosynthesis; chorismate biosynthesis; chorismate from D-erythrose 4-phosphate and phosphoenolpyruvate: step 4/7. Its function is as follows. Involved in the biosynthesis of the chorismate, which leads to the biosynthesis of aromatic amino acids. Catalyzes the reversible NADPH linked reduction of 3-dehydroshikimate (DHSA) to yield shikimate (SA). The chain is Shikimate dehydrogenase (NADP(+)) from Syntrophomonas wolfei subsp. wolfei (strain DSM 2245B / Goettingen).